The sequence spans 617 residues: Zinc finger protein 613 (617 aa).

One can recognise a KRAB domain in the interval 8 to 78; the sequence is LTLEDVAVEF…ENEIHSQICP (71 aa). C2H2-type zinc fingers lie at residues 204–226, 232–254, 260–282, 288–310, 316–338, 344–366, 372–394, 400–422, 428–450, 456–478, 484–506, and 512–535; these read HVCT…QRVH, HGCS…QRNH, YECT…QKIH, YICS…QRVH, HGCS…QRTH, YECT…QKAH, YICR…QRIH, YICN…RRTH, YVCN…QRFH, FVCT…QRIH, YTCS…RRTH, and YGCS…GMLH.

The protein belongs to the krueppel C2H2-type zinc-finger protein family.

The protein resides in the nucleus. May be involved in transcriptional regulation. In Homo sapiens (Human), this protein is Zinc finger protein 613 (ZNF613).